Consider the following 326-residue polypeptide: tRNA uridine(34) hydroxylase (326 aa).

The region spanning 123-217 (ADPEVFVVDT…YLEEVPEEES (95 aa)) is the Rhodanese domain. The active-site Cysteine persulfide intermediate is Cys-177. Residues 293 to 326 (AVRGEQHVGGESAKQRQQRRAEKLAKKDVQRKQA) are disordered. The segment covering 311–326 (RRAEKLAKKDVQRKQA) has biased composition (basic and acidic residues).

Belongs to the TrhO family.

It carries out the reaction uridine(34) in tRNA + AH2 + O2 = 5-hydroxyuridine(34) in tRNA + A + H2O. Catalyzes oxygen-dependent 5-hydroxyuridine (ho5U) modification at position 34 in tRNAs. The protein is tRNA uridine(34) hydroxylase of Vibrio campbellii (strain ATCC BAA-1116).